A 95-amino-acid polypeptide reads, in one-letter code: UPF0213 protein PEPE_0875 (95 aa).

The GIY-YIG domain occupies 7–82; that stretch reads NGFYFYVLRC…KQRTRSSKIK (76 aa).

The protein belongs to the UPF0213 family.

In Pediococcus pentosaceus (strain ATCC 25745 / CCUG 21536 / LMG 10740 / 183-1w), this protein is UPF0213 protein PEPE_0875.